The following is a 330-amino-acid chain: Aspartate--ammonia ligase (330 aa).

The protein belongs to the class-II aminoacyl-tRNA synthetase family. AsnA subfamily.

The protein localises to the cytoplasm. It carries out the reaction L-aspartate + NH4(+) + ATP = L-asparagine + AMP + diphosphate + H(+). The protein operates within amino-acid biosynthesis; L-asparagine biosynthesis; L-asparagine from L-aspartate (ammonia route): step 1/1. In Shigella flexneri serotype 5b (strain 8401), this protein is Aspartate--ammonia ligase.